The primary structure comprises 206 residues: Ras-related protein Rab-7b (206 aa).

Residue 15–22 (GDSGVGKT) participates in GTP binding. Residues S17 and S23 each carry the phosphoserine modification. 3 positions are modified to phosphothreonine: T34, T40, and T64. GTP-binding positions include 34 to 40 (TQQYRAT) and 63 to 67 (DTAGQ). Residues 37–45 (YRATVGADF) carry the Effector region motif. S72 carries the phosphoserine modification. Y78 and Y88 each carry phosphotyrosine. GTP-binding positions include 125-128 (NKLD) and 157-158 (AK). S-geranylgeranyl cysteine attachment occurs at residues C205 and C206.

The protein belongs to the small GTPase superfamily. Rab family. In terms of processing, glycosylated.

The protein localises to the cytoplasm. It localises to the cytoskeleton. This is Ras-related protein Rab-7b from Paramecium octaurelia.